The following is a 579-amino-acid chain: Potassium-transporting ATPase potassium-binding subunit (579 aa).

A run of 10 helical transmembrane segments spans residues 1 to 21 (MISN…ACVV), 64 to 84 (HYAL…YGLQ), 135 to 155 (GLTV…IGLI), 178 to 198 (IYIL…QGVV), 265 to 285 (FLEL…FGLM), 293 to 313 (WAIL…AVSA), 398 to 418 (GLYG…LMVG), 435 to 455 (MAAL…AIAV), 503 to 523 (WLGI…LAIA), and 549 to 569 (LLIG…LALG).

The protein belongs to the KdpA family. The system is composed of three essential subunits: KdpA, KdpB and KdpC.

It localises to the cell membrane. Its function is as follows. Part of the high-affinity ATP-driven potassium transport (or Kdp) system, which catalyzes the hydrolysis of ATP coupled with the electrogenic transport of potassium into the cytoplasm. This subunit binds the extracellular potassium ions and delivers the ions to the membrane domain of KdpB through an intramembrane tunnel. This chain is Potassium-transporting ATPase potassium-binding subunit, found in Herpetosiphon aurantiacus (strain ATCC 23779 / DSM 785 / 114-95).